An 841-amino-acid chain; its full sequence is Protein translocase subunit SecA (841 aa).

Residues Gln-85, 103 to 107, and Asp-492 each bind ATP; that span reads GEGKT. Positions 786-812 are disordered; that stretch reads REEVVQGQTTAHQPQDGDEAKQAKKAP. Zn(2+) is bound by residues Cys-825, Cys-827, Cys-836, and Cys-837.

It belongs to the SecA family. Monomer and homodimer. Part of the essential Sec protein translocation apparatus which comprises SecA, SecYEG and auxiliary proteins SecDF. Other proteins may also be involved. Zn(2+) is required as a cofactor.

It is found in the cell membrane. It localises to the cytoplasm. The enzyme catalyses ATP + H2O + cellular proteinSide 1 = ADP + phosphate + cellular proteinSide 2.. Functionally, part of the Sec protein translocase complex. Interacts with the SecYEG preprotein conducting channel. Has a central role in coupling the hydrolysis of ATP to the transfer of proteins into and across the cell membrane, serving as an ATP-driven molecular motor driving the stepwise translocation of polypeptide chains across the membrane. This is Protein translocase subunit SecA from Bacillus velezensis (strain DSM 23117 / BGSC 10A6 / LMG 26770 / FZB42) (Bacillus amyloliquefaciens subsp. plantarum).